Consider the following 367-residue polypeptide: UDP-galactopyranose mutase (367 aa).

FAD is bound by residues Phe-12, 31-32, Asn-39, and 56-57; these read EK and HI. Phe-12 serves as a coordination point for UDP-alpha-D-galactose. UDP-alpha-D-galactose is bound by residues Asn-80, Thr-152, Trp-156, and Tyr-181. Residue 212 to 213 participates in FAD binding; sequence DF. Positions 268, 278, and 311 each coordinate UDP-alpha-D-galactose. Arg-340 provides a ligand contact to FAD. Tyr-346 contributes to the UDP-alpha-D-galactose binding site. 347–352 contacts FAD; it reads YDMHQV.

Homodimer. Requires FAD as cofactor.

The catalysed reaction is UDP-alpha-D-galactose = UDP-alpha-D-galactofuranose. The protein operates within bacterial outer membrane biogenesis; lipopolysaccharide biosynthesis. Catalyzes the interconversion through a 2-keto intermediate of uridine diphosphogalactopyranose (UDP-GalP) into uridine diphosphogalactofuranose (UDP-GalF). The sequence is that of UDP-galactopyranose mutase (glf) from Escherichia coli (strain K12).